Consider the following 273-residue polypeptide: WIMGHMVNAIAQIDEFVNLGANSIETDVSFDKNANPEYTYHGIPCDCGRTCTKSEKFNVFLQGLQKATTPGDSKYQEKLVLVVFDLKSSSLYDNQASDAGKKLAKSLLQNYWKNGNNGGRAYIVLSIPNLAHYKLITGFKETLKTEGHPELMEKVGYDFSGNDDIDQVAKAYKKAGVTGHVWQSDGITNCLPRGLDRVKQAVANRDSSNGFINKVYYWTVDKRSTTRGALDAGVDGIMANYPDVIADVLSESAYKSKFRIATYEDNPWETFKN.

H5 is an active-site residue. Mg(2+)-binding residues include E25 and D27. H41 (nucleophile) is an active-site residue. 2 disulfides stabilise this stretch: C45–C51 and C47–C190. D85 lines the Mg(2+) pocket.

This sequence belongs to the arthropod phospholipase D family. Class II subfamily. It depends on Mg(2+) as a cofactor. As to expression, expressed by the venom gland.

Its subcellular location is the secreted. It carries out the reaction an N-(acyl)-sphingosylphosphocholine = an N-(acyl)-sphingosyl-1,3-cyclic phosphate + choline. It catalyses the reaction an N-(acyl)-sphingosylphosphoethanolamine = an N-(acyl)-sphingosyl-1,3-cyclic phosphate + ethanolamine. The enzyme catalyses a 1-acyl-sn-glycero-3-phosphocholine = a 1-acyl-sn-glycero-2,3-cyclic phosphate + choline. The catalysed reaction is a 1-acyl-sn-glycero-3-phosphoethanolamine = a 1-acyl-sn-glycero-2,3-cyclic phosphate + ethanolamine. Functionally, dermonecrotic toxins cleave the phosphodiester linkage between the phosphate and headgroup of certain phospholipids (sphingolipid and lysolipid substrates), forming an alcohol (often choline) and a cyclic phosphate. This toxin acts on sphingomyelin (SM). It may also act on ceramide phosphoethanolamine (CPE), lysophosphatidylcholine (LPC) and lysophosphatidylethanolamine (LPE), but not on lysophosphatidylserine (LPS), and lysophosphatidylglycerol (LPG). It acts by transphosphatidylation, releasing exclusively cyclic phosphate products as second products. Induces dermonecrosis, hemolysis, increased vascular permeability, edema, inflammatory response, and platelet aggregation. This Loxosceles deserta (Desert recluse spider) protein is Dermonecrotic toxin LdSicTox-alphaIB3aiii.